Here is a 781-residue protein sequence, read N- to C-terminus: Toll-like receptor 2 type-2 (781 aa).

The first 24 residues, 1 to 24, serve as a signal peptide directing secretion; the sequence is MHTWKMWAICTALAAHLPEEQALR. Residues 25-585 are Extracellular-facing; sequence QACLSCDATQ…QLSLMECHRS (561 aa). A disulfide bridge links cysteine 30 with cysteine 36. Asparagine 37 carries an N-linked (GlcNAc...) asparagine glycan. 6 LRR repeats span residues 53–74, 77–98, 101–122, 125–146, 150–171, and 174–195; these read KITVLNLAHNRIKVIRTHDLQK, NLRTLLLQSNQISSIDEDSFGS, KLELLDLSNNSLAHLSPVWFGP, SLQHLRIQGNSYSDLGESSPFS, NLSSLHLGNPQFSIIRQGNFEG, and FLNTLRIDGDNLSQYEPGSLKS. An N-linked (GlcNAc...) asparagine glycan is attached at asparagine 109. 4 N-linked (GlcNAc...) asparagine glycosylation sites follow: asparagine 150, asparagine 184, asparagine 301, and asparagine 313. Cysteine 350 and cysteine 379 form a disulfide bridge. 7 LRR repeats span residues 358-378, 385-406, 411-432, 434-455, 456-474, 475-496, and 497-518; these read SLEYLDLSANLLGDQSLEHSA, SLQTLNLSQNSLSDLKMTGKSL, NLNLLDISENNFGEIPDMCEWP, NLKYLNLSSTQIPKLTTCIPST, LEVLDVSANNLQDFGLQLP, FLKELYLTKNHLKTLPEATDIP, and NLVAMSISRNKLNSFSKEEFES. Asparagine 390 is a glycosylation site (N-linked (GlcNAc...) asparagine). Residues cysteine 429 and cysteine 451 are joined by a disulfide bond. The N-linked (GlcNAc...) asparagine glycan is linked to asparagine 439. The region spanning 530-584 is the LRRCT domain; that stretch reads NNFICSCEFLSFIHHEAGIAQVLVGWPESYICDSPLTVRGAQVGSVQLSLMECHR. The helical transmembrane segment at 586 to 606 threads the bilayer; that stretch reads LLVSLICTLVFLFILILVVVG. The Cytoplasmic segment spans residues 607–781; it reads YKYHAVWYMR…WENLKAALKS (175 aa). Positions 636–779 constitute a TIR domain; it reads ICYDAFVSYS…MFWENLKAAL (144 aa).

This sequence belongs to the Toll-like receptor family. In terms of assembly, binds MYD88 (via TIR domain). Post-translationally, N-glycosylated. In terms of tissue distribution, highly expressed in ovary. Also detected in brain, heart, lung, liver, spleen and kidney, and at low levels in gizzard, muscle, testis and proventriculus.

Its subcellular location is the membrane. In terms of biological role, participates in the innate immune response to microbial agents. Acts via MYD88 and TRAF6, leading to NF-kappa-B activation, cytokine secretion and the inflammatory response. Mediates the response to mycoplasmal macrophage-activating lipopeptide-2kD (MALP-2). This chain is Toll-like receptor 2 type-2 (TLR2-2), found in Gallus gallus (Chicken).